Reading from the N-terminus, the 356-residue chain is D-amino-acid oxidase (356 aa).

The N-terminal stretch at 1–17 (MAKIVVIGAGVAGLTTA) is a signal peptide. 4 residues coordinate FAD: alanine 9, serine 44, glycine 48, and asparagine 50. Phenylalanine 54 lines the anthranilate pocket. Valine 171 contacts FAD. N-linked (GlcNAc...) asparagine glycosylation is present at asparagine 192. Tyrosine 243 is a binding site for anthranilate. Residue tyrosine 243 participates in (R)-lactate binding. N-linked (GlcNAc...) asparagine glycosylation occurs at asparagine 262. Residues arginine 302, alanine 329, glycine 332, tyrosine 333, and glutamine 334 each coordinate FAD. Arginine 302 is an anthranilate binding site. A (R)-lactate-binding site is contributed by arginine 302.

Belongs to the DAMOX/DASOX family. Requires FAD as cofactor.

It is found in the peroxisome matrix. The enzyme catalyses a D-alpha-amino acid + O2 + H2O = a 2-oxocarboxylate + H2O2 + NH4(+). It catalyses the reaction D-alanine + O2 + H2O = pyruvate + H2O2 + NH4(+). It carries out the reaction D-serine + O2 + H2O = 3-hydroxypyruvate + H2O2 + NH4(+). The catalysed reaction is D-phenylalanine + O2 + H2O = 3-phenylpyruvate + H2O2 + NH4(+). The enzyme catalyses D-lysine + O2 + H2O = 6-amino-2-oxohexanoate + H2O2 + NH4(+). It catalyses the reaction D-tyrosine + O2 + H2O = 3-(4-hydroxyphenyl)pyruvate + H2O2 + NH4(+). It carries out the reaction D-methionine + O2 + H2O = 4-methylsulfanyl-2-oxobutanoate + H2O2 + NH4(+). The catalysed reaction is D-tryptophan + O2 + H2O = indole-3-pyruvate + H2O2 + NH4(+). The enzyme catalyses D-leucine + O2 + H2O = 4-methyl-2-oxopentanoate + H2O2 + NH4(+). It catalyses the reaction D-valine + O2 + H2O = 3-methyl-2-oxobutanoate + H2O2 + NH4(+). Inhibited by benzoate and hypochlorite. Catalyzes the oxidative deamination of D-amino acids with broad substrate specificity. Enables the organism to utilize D-amino acids as a source of nutrients. The polypeptide is D-amino-acid oxidase (Trigonopsis variabilis (Yeast)).